The chain runs to 240 residues: LexA repressor (240 aa).

Positions 26–46 (FDEMKDALDLKSKSGIHRLIT) form a DNA-binding region, H-T-H motif. Residues S161 and K199 each act as for autocatalytic cleavage activity in the active site.

Belongs to the peptidase S24 family. In terms of assembly, homodimer.

The enzyme catalyses Hydrolysis of Ala-|-Gly bond in repressor LexA.. In terms of biological role, represses a number of genes involved in the response to DNA damage (SOS response), including recA and lexA. In the presence of single-stranded DNA, RecA interacts with LexA causing an autocatalytic cleavage which disrupts the DNA-binding part of LexA, leading to derepression of the SOS regulon and eventually DNA repair. This chain is LexA repressor, found in Methylobacterium nodulans (strain LMG 21967 / CNCM I-2342 / ORS 2060).